A 122-amino-acid chain; its full sequence is Beta-2-microglobulin (122 aa).

An N-terminal signal peptide occupies residues 1–23 (MFLRSTFVAALVACLAYIHLGDA). The 90-residue stretch at 28-117 (PKVQIYSRNV…STLREATRFT (90 aa)) folds into the Ig-like C1-type domain. A disulfide bond links Cys-48 and Cys-103.

The protein belongs to the beta-2-microglobulin family. In terms of assembly, heterodimer of an alpha chain and a beta chain. Beta-2-microglobulin is the beta-chain of major histocompatibility complex class I molecules.

The protein localises to the secreted. Component of the class I major histocompatibility complex (MHC). Involved in the presentation of peptide antigens to the immune system. This Acipenser baerii (Siberian sturgeon) protein is Beta-2-microglobulin (b2m).